Reading from the N-terminus, the 115-residue chain is MNPLIQSLTEGQLRTDIPSFRPGDTVRVHAKVVEGSRERIQIFEGVVISRKSQGISEMYTVRKISSGIGVERTFPIHTPRVEKIEVVRHGKVRRAKLYYLRALQGKAARIKEIRR.

This sequence belongs to the bacterial ribosomal protein bL19 family.

In terms of biological role, this protein is located at the 30S-50S ribosomal subunit interface and may play a role in the structure and function of the aminoacyl-tRNA binding site. This chain is Large ribosomal subunit protein bL19, found in Streptococcus equi subsp. equi (strain 4047).